The sequence spans 279 residues: Putative pyruvate, phosphate dikinase regulatory protein (279 aa).

153–160 (GVSRTSKT) lines the ADP pocket.

The protein belongs to the pyruvate, phosphate/water dikinase regulatory protein family. PDRP subfamily.

It catalyses the reaction N(tele)-phospho-L-histidyl/L-threonyl-[pyruvate, phosphate dikinase] + ADP = N(tele)-phospho-L-histidyl/O-phospho-L-threonyl-[pyruvate, phosphate dikinase] + AMP + H(+). The enzyme catalyses N(tele)-phospho-L-histidyl/O-phospho-L-threonyl-[pyruvate, phosphate dikinase] + phosphate + H(+) = N(tele)-phospho-L-histidyl/L-threonyl-[pyruvate, phosphate dikinase] + diphosphate. In terms of biological role, bifunctional serine/threonine kinase and phosphorylase involved in the regulation of the pyruvate, phosphate dikinase (PPDK) by catalyzing its phosphorylation/dephosphorylation. The chain is Putative pyruvate, phosphate dikinase regulatory protein from Bradyrhizobium diazoefficiens (strain JCM 10833 / BCRC 13528 / IAM 13628 / NBRC 14792 / USDA 110).